The chain runs to 130 residues: Small ribosomal subunit protein uS9 (130 aa).

Belongs to the universal ribosomal protein uS9 family.

This Aeromonas salmonicida (strain A449) protein is Small ribosomal subunit protein uS9.